The following is a 359-amino-acid chain: DNA replication and repair protein RecF (359 aa).

30 to 37 (GPNGSGKT) contacts ATP.

Belongs to the RecF family.

Its subcellular location is the cytoplasm. Its function is as follows. The RecF protein is involved in DNA metabolism; it is required for DNA replication and normal SOS inducibility. RecF binds preferentially to single-stranded, linear DNA. It also seems to bind ATP. The chain is DNA replication and repair protein RecF from Vibrio vulnificus (strain CMCP6).